Here is a 266-residue protein sequence, read N- to C-terminus: Zinc finger protein SNAI2 (266 aa).

The SNAG domain stretch occupies residues M1 to G20. The segment at S75–L115 is disordered. 4 consecutive C2H2-type zinc fingers follow at residues F126–H148, F157–H179, C183–H205, and F211–H233. The C2H2-type 5; atypical zinc finger occupies Y239 to C262.

It belongs to the snail C2H2-type zinc-finger protein family. Interacts (via SNAG domain) with limd1 (via LIM domains), wtip (via LIM domains) and ajuba (via LIM domains). Interacts with elp3. As to expression, first expressed on the lateral side of stage 12 embryos. At stage 14, strongly expressed in the lateral neural folds. At stage 16, expressed in pre-migratory neural crest cells. At stage 18, expression is dispersed over the neural plate in a pattern surrounding the rhombomeres. At stage 22, expressed in neural crest derivatives, including the branchial arches and the tissues surrounding the eyes and forebrain. After stage 17, expression is weak in the lateral plate mesoderm, increasing at stage 26, but was down-regulated in the pronephros region at stage 26.

The protein localises to the nucleus. Probable transcriptional repressor. Acts downstream of snai1 in the specification of the neural crest and neural crest migration. This Xenopus laevis (African clawed frog) protein is Zinc finger protein SNAI2 (snai2).